Here is a 230-residue protein sequence, read N- to C-terminus: Ribonuclease 3 (230 aa).

The 130-residue stretch at 5–134 (NDTISKVINY…LIGAIYIDGG (130 aa)) folds into the RNase III domain. Glutamate 47 serves as a coordination point for Mg(2+). Residue aspartate 51 is part of the active site. Mg(2+) contacts are provided by asparagine 120 and glutamate 123. Glutamate 123 is an active-site residue. The region spanning 159-228 (DPKTSLQEWT…AELILEKIKK (70 aa)) is the DRBM domain.

Belongs to the ribonuclease III family. In terms of assembly, homodimer. The cofactor is Mg(2+).

It is found in the cytoplasm. It catalyses the reaction Endonucleolytic cleavage to 5'-phosphomonoester.. Its function is as follows. Digests double-stranded RNA. Involved in the processing of primary rRNA transcript to yield the immediate precursors to the large and small rRNAs (23S and 16S). Processes some mRNAs, and tRNAs when they are encoded in the rRNA operon. Processes pre-crRNA and tracrRNA of type II CRISPR loci if present in the organism. This Wolbachia pipientis subsp. Culex pipiens (strain wPip) protein is Ribonuclease 3.